A 646-amino-acid polypeptide reads, in one-letter code: Zinc finger protein 503 (646 aa).

Over residues 1–11 the composition is skewed to polar residues; it reads MSTAPSLSALR. The disordered stretch occupies residues 1–70; that stretch reads MSTAPSLSAL…PPSDPLRQAN (70 aa). The span at 16-28 shows a compositional bias: gly residues; sequence SGGGGGGGGGGGA. Over residues 34 to 52 the composition is skewed to low complexity; that stretch reads SALSGNSSGPGPGSSPAGS. Phosphoserine is present on Ser-102. Residues 121–332 are disordered; sequence SQIGKPDPSP…PSAPTSSSVL (212 aa). A compositionally biased stretch (low complexity) spans 130–139; it reads PSSKLSSVAS. 2 stretches are compositionally biased toward gly residues: residues 140-152 and 189-205; these read NGGGAGGAGGGAA and GGGGGGGGGGGGGGGGV. N6-acetyllysine is present on Lys-209. Residues 217–226 show a composition bias toward polar residues; that stretch reads ATCQPFTPRT. The span at 227 to 240 shows a compositional bias: low complexity; it reads GSPSSSASACSPGG. A phosphoserine mark is found at Ser-231 and Ser-237. A compositionally biased stretch (basic and acidic residues) spans 250–259; the sequence is EGKDDKKDTD. Composition is skewed to gly residues over residues 260-277 and 300-315; these read VGGGGKGTGGASAEGGPT and GGPGGKALGSDCGGSS. The segment covering 316–330 has biased composition (low complexity); it reads GSSSGSGPSAPTSSS. The segment at 514-542 adopts a C2H2-type zinc-finger fold; the sequence is HICNWVSANGPCDKRFATSEELLSHLRTH. Omega-N-methylarginine is present on Arg-636.

It belongs to the Elbow/Noc family.

It localises to the nucleus. Functionally, may function as a transcriptional repressor. The sequence is that of Zinc finger protein 503 (ZNF503) from Homo sapiens (Human).